Here is a 255-residue protein sequence, read N- to C-terminus: Protein PH0439 (255 aa).

The protein belongs to the CinA family.

The polypeptide is Protein PH0439 (Pyrococcus horikoshii (strain ATCC 700860 / DSM 12428 / JCM 9974 / NBRC 100139 / OT-3)).